We begin with the raw amino-acid sequence, 513 residues long: GTPase Obg (513 aa).

The 158-residue stretch at 3–160 folds into the Obg domain; the sequence is THFVDRVVVH…LDLHLEVKTL (158 aa). An OBG-type G domain is found at 161–337; that stretch reads ADVALVGFPS…LSFAMAELVS (177 aa). GTP is bound by residues 167–174, 192–196, 213–216, 289–292, and 318–320; these read GFPSAGKS, FTTLV, DVPG, NKAD, and SAV. S174 and T194 together coordinate Mg(2+). An OCT domain is found at 355–444; that stretch reads PRAVDDQGFK…ANAVVFDWEP (90 aa). Residues 457 to 513 form a disordered region; it reads GSDLRLEDHSRPTRDEKRLQERERRAAKVTARDELEAERRAGHWTAADEADEELSQR. A compositionally biased stretch (basic and acidic residues) spans 458–497; that stretch reads SDLRLEDHSRPTRDEKRLQERERRAAKVTARDELEAERRA. Acidic residues predominate over residues 504-513; sequence DEADEELSQR.

This sequence belongs to the TRAFAC class OBG-HflX-like GTPase superfamily. OBG GTPase family. Monomer. The cofactor is Mg(2+).

The protein resides in the cytoplasm. Functionally, an essential GTPase which binds GTP, GDP and possibly (p)ppGpp with moderate affinity, with high nucleotide exchange rates and a fairly low GTP hydrolysis rate. Plays a role in control of the cell cycle, stress response, ribosome biogenesis and in those bacteria that undergo differentiation, in morphogenesis control. The protein is GTPase Obg of Kineococcus radiotolerans (strain ATCC BAA-149 / DSM 14245 / SRS30216).